The primary structure comprises 260 residues: Triosephosphate isomerase (260 aa).

A substrate-binding site is contributed by 11-13; the sequence is NWK. Residue histidine 103 is the Electrophile of the active site. The Proton acceptor role is filled by glutamate 175. Substrate contacts are provided by residues glycine 181, serine 220, and 241–242; that span reads GG.

The protein belongs to the triosephosphate isomerase family. Homodimer.

The protein localises to the cytoplasm. The enzyme catalyses D-glyceraldehyde 3-phosphate = dihydroxyacetone phosphate. The protein operates within carbohydrate biosynthesis; gluconeogenesis. It participates in carbohydrate degradation; glycolysis; D-glyceraldehyde 3-phosphate from glycerone phosphate: step 1/1. Functionally, involved in the gluconeogenesis. Catalyzes stereospecifically the conversion of dihydroxyacetone phosphate (DHAP) to D-glyceraldehyde-3-phosphate (G3P). The chain is Triosephosphate isomerase from Shewanella sp. (strain MR-4).